A 256-amino-acid chain; its full sequence is MNDQRKGDHAEPTTHFGYQDVPESQKAKKVAEVFHSVAAKYDLMNDVLSGGMHRLWKRFTIELSGVRSGNRVLDIAGGTGDLAAKFSRLVGPTGQVVLADINDSMLKVGRDRLLDRGVAGNIEFVQADAEKLPFPDNHFDCVTIAFGLRNVTHKDAAIRSMLRVLKPGGRLLILEFSKPTNKLMSKAYDAYSFAFMPLAGKLITNDAESYRYLAESIRMHPDQETLKSMMVEAGFDRVTYHNMTSGIVAVHRGIKP.

Basic and acidic residues predominate over residues 1–12 (MNDQRKGDHAEP). Positions 1 to 23 (MNDQRKGDHAEPTTHFGYQDVPE) are disordered. S-adenosyl-L-methionine is bound by residues threonine 79, aspartate 100, and 128–129 (DA).

It belongs to the class I-like SAM-binding methyltransferase superfamily. MenG/UbiE family.

It catalyses the reaction a 2-demethylmenaquinol + S-adenosyl-L-methionine = a menaquinol + S-adenosyl-L-homocysteine + H(+). The catalysed reaction is a 2-methoxy-6-(all-trans-polyprenyl)benzene-1,4-diol + S-adenosyl-L-methionine = a 5-methoxy-2-methyl-3-(all-trans-polyprenyl)benzene-1,4-diol + S-adenosyl-L-homocysteine + H(+). Its pathway is quinol/quinone metabolism; menaquinone biosynthesis; menaquinol from 1,4-dihydroxy-2-naphthoate: step 2/2. The protein operates within cofactor biosynthesis; ubiquinone biosynthesis. Functionally, methyltransferase required for the conversion of demethylmenaquinol (DMKH2) to menaquinol (MKH2) and the conversion of 2-polyprenyl-6-methoxy-1,4-benzoquinol (DDMQH2) to 2-polyprenyl-3-methyl-6-methoxy-1,4-benzoquinol (DMQH2). The sequence is that of Ubiquinone/menaquinone biosynthesis C-methyltransferase UbiE from Pseudomonas putida (strain ATCC 700007 / DSM 6899 / JCM 31910 / BCRC 17059 / LMG 24140 / F1).